The sequence spans 911 residues: Inter-alpha-trypsin inhibitor heavy chain H1 (911 aa).

The signal sequence occupies residues 1-27 (MDGAMGPRGLLLCMYLVSLLILQAMPA). Positions 28–34 (LGSATGR) are excised as a propeptide. The VIT domain maps to 37-166 (SSEKRQAVDT…KVTFQLTYEE (130 aa)). The S-linked (Hex...) cysteine glycan is linked to Cys60. Ser129 is subject to Phosphoserine. A Phagocytosis uptake signal motif is present at residues 181-184 (VKPK). 2 cysteine pairs are disulfide-bonded: Cys244-Cys247 and Cys268-Cys540. Residue Asn285 is glycosylated (N-linked (GlcNAc...) (complex) asparagine). Residues 290–450 (NKNVVFVIDI…FNFLEVMSME (161 aa)) form the VWFA domain. A hyaluronan-binding region spans residues 387–911 (SLPELSNHAS…YTDYIVPDIF (525 aa)). Residues Thr402 and Thr407 each carry the phosphothreonine modification. Asn588 is a glycosylation site (N-linked (GlcNAc...) (complex) asparagine). Residue Thr653 is glycosylated (O-linked (GalNAc...) threonine). At Asp672 the chain carries Aspartate 1-(chondroitin 4-sulfate)-ester. Positions 673 to 911 (PHFIIHVPQK…YTDYIVPDIF (239 aa)) are excised as a propeptide. The N-linked (GlcNAc...) asparagine glycan is linked to Asn750.

The protein belongs to the ITIH family. In terms of assembly, I-alpha-I plasma protease inhibitors are assembled from one or two heavy chains (HC) and one light chain, bikunin. Inter-alpha-inhibitor (I-alpha-I) is composed of ITIH1/HC1, ITIH2/HC2 and bikunin. Interacts with TNFAIP6 (via Link and CUB domains). In terms of processing, heavy chains are linked to bikunin via chondroitin 4-sulfate esterified to the alpha-carboxyl of the C-terminal aspartate after propeptide cleavage. The S-linked glycan is composed of two 6-carbon sugars, possibly Glc or Gal.

The protein resides in the secreted. May act as a carrier of hyaluronan in serum or as a binding protein between hyaluronan and other matrix protein, including those on cell surfaces in tissues to regulate the localization, synthesis and degradation of hyaluronan which are essential to cells undergoing biological processes. Its function is as follows. Contains a potential peptide which could stimulate a broad spectrum of phagocytotic cells. This chain is Inter-alpha-trypsin inhibitor heavy chain H1 (ITIH1), found in Homo sapiens (Human).